The following is a 683-amino-acid chain: Boron transporter 4 (683 aa).

The Cytoplasmic portion of the chain corresponds to 1–38; that stretch reads MEEERVDSSKRLFRGIVADLRGRALCYKEDWVAGLRSG. A helical membrane pass occupies residues 39-59; the sequence is FGILAPTTYIFFASALPVIAF. At 60–80 the chain is on the extracellular side; sequence GEQLSRDTEGALSTVETLAST. Residues 81–101 traverse the membrane as a helical segment; the sequence is ALCGVIHSILGGQPLLILGVA. Residues 102–126 lie on the Cytoplasmic side of the membrane; it reads EPTVLMYVYLYNFAIGRPELGKQLY. A helical transmembrane segment spans residues 127–147; that stretch reads LAWAAWVCVWTALLLFVMAIL. Topologically, residues 148 to 160 are extracellular; sequence NTADIINRFTRVA. The chain crosses the membrane as a helical span at residues 161 to 181; sequence GELFGMLISVLFIQQAIKGMV. The Cytoplasmic segment spans residues 182 to 200; the sequence is SEFGMPKDEDSKLEKYKFE. The helical transmembrane segment at 201–221 threads the bilayer; it reads WLYTNGLLGLIFTFGLLYTAL. The Extracellular portion of the chain corresponds to 222 to 238; sequence KSRKARSWRYGTGWYRS. Residues 239-259 traverse the membrane as a helical segment; that stretch reads FIADYGVPLMVVVWTALSFST. The Cytoplasmic segment spans residues 260–294; that stretch reads PSKLPSGVPRRLFSPLPWDSPSLSHWTVIKDMGKV. A helical membrane pass occupies residues 295–315; sequence SPGYIFAAFIPALMIAGLYFF. The Extracellular segment spans residues 316–335; that stretch reads DHSVASQLAQQKEFNLKKPS. A helical transmembrane segment spans residues 336-356; that stretch reads AYHYDILLLGFMTLICGLLGL. The Cytoplasmic portion of the chain corresponds to 357–477; it reads PPSNGVLPQS…EQRVSNLLQS (121 aa). Residues 478–498 traverse the membrane as a helical segment; it reads LLVAGAVLAMPAIKLIPTSIL. Topologically, residues 499 to 565 are extracellular; that stretch reads WGYFAYMAID…QIFYFGLCYG (67 aa). A helical membrane pass occupies residues 566 to 586; sequence VTWIPVAGIMFPVPFFLLIAI. Residues 587–683 lie on the Cytoplasmic side of the membrane; it reads RQYILPKLFN…GDGDMSTTRE (97 aa). Disordered regions lie at residues 617 to 638 and 661 to 683; these read NPLELSFRSNDSKRGVQEGDAE and KGNQIYPKEKVKAGDGDMSTTRE.

Belongs to the anion exchanger (TC 2.A.31.3) family. As to expression, expressed in the distal sides of epidermal cells in the elongation zone of roots.

The protein localises to the membrane. In terms of biological role, efflux-type boron transporter polarly localized in roots. Boron is essential for maintaining the integrity of plants cell walls. The protein is Boron transporter 4 (BOR4) of Arabidopsis thaliana (Mouse-ear cress).